A 330-amino-acid polypeptide reads, in one-letter code: Mitochondrial glycine transporter (330 aa).

3 Solcar repeats span residues Ser11–Asn94, Leu122–Arg206, and Thr234–Arg318. Transmembrane regions (helical) follow at residues Phe17–Gln42, Gly69–Val95, Leu128–Glu153, Gly181–Lys204, Ile238–Ile264, and Gly293–Ile311.

Belongs to the mitochondrial carrier (TC 2.A.29) family. SLC25A38 subfamily.

It is found in the mitochondrion inner membrane. It carries out the reaction glycine(in) = glycine(out). In terms of biological role, mitochondrial glycine transporter that imports glycine into the mitochondrial matrix. Plays an important role in providing glycine for the first enzymatic step in heme biosynthesis, the condensation of glycine with succinyl-CoA to produce 5-aminolevulinate (ALA) in the mitochondrial matrix. This chain is Mitochondrial glycine transporter, found in Sclerotinia sclerotiorum (strain ATCC 18683 / 1980 / Ss-1) (White mold).